The sequence spans 354 residues: 3-dehydroquinate synthase (354 aa).

NAD(+) contacts are provided by residues 100 to 104 (GATGD), 124 to 125 (TT), Lys-136, Lys-145, and 163 to 166 (FLAT). Residues Glu-178, His-242, and His-256 each contribute to the Zn(2+) site.

Belongs to the sugar phosphate cyclases superfamily. Dehydroquinate synthase family. Requires Co(2+) as cofactor. Zn(2+) is required as a cofactor. It depends on NAD(+) as a cofactor.

It is found in the cytoplasm. It carries out the reaction 7-phospho-2-dehydro-3-deoxy-D-arabino-heptonate = 3-dehydroquinate + phosphate. It functions in the pathway metabolic intermediate biosynthesis; chorismate biosynthesis; chorismate from D-erythrose 4-phosphate and phosphoenolpyruvate: step 2/7. Functionally, catalyzes the conversion of 3-deoxy-D-arabino-heptulosonate 7-phosphate (DAHP) to dehydroquinate (DHQ). The polypeptide is 3-dehydroquinate synthase (Staphylococcus haemolyticus (strain JCSC1435)).